A 292-amino-acid polypeptide reads, in one-letter code: Elongation factor Ts (292 aa).

The tract at residues 79–82 is involved in Mg(2+) ion dislocation from EF-Tu; sequence TDFV.

The protein belongs to the EF-Ts family.

Its subcellular location is the cytoplasm. In terms of biological role, associates with the EF-Tu.GDP complex and induces the exchange of GDP to GTP. It remains bound to the aminoacyl-tRNA.EF-Tu.GTP complex up to the GTP hydrolysis stage on the ribosome. This chain is Elongation factor Ts, found in Staphylococcus haemolyticus (strain JCSC1435).